The sequence spans 150 residues: uncharacterized protein (150 aa).

Residues 4 to 148 form the Flavodoxin-like domain; sequence LILYKSIHHK…KAKEFAKSIL (145 aa).

This is an uncharacterized protein from Methanocaldococcus jannaschii (strain ATCC 43067 / DSM 2661 / JAL-1 / JCM 10045 / NBRC 100440) (Methanococcus jannaschii).